The primary structure comprises 474 residues: Cysteine--tRNA ligase (474 aa).

Cys30 serves as a coordination point for Zn(2+). The 'HIGH' region signature appears at 32–42 (PTVYNYAHIGN). Residues Cys215, His240, and Glu244 each coordinate Zn(2+). The short motif at 272–276 (KMSKS) is the 'KMSKS' region element. ATP is bound at residue Lys275.

This sequence belongs to the class-I aminoacyl-tRNA synthetase family. In terms of assembly, monomer. The cofactor is Zn(2+).

It localises to the cytoplasm. The enzyme catalyses tRNA(Cys) + L-cysteine + ATP = L-cysteinyl-tRNA(Cys) + AMP + diphosphate. The chain is Cysteine--tRNA ligase from Brachyspira hyodysenteriae (strain ATCC 49526 / WA1).